The sequence spans 102 residues: Large ribosomal subunit protein bL36m (102 aa).

It belongs to the bacterial ribosomal protein bL36 family. Component of the mitochondrial ribosome large subunit (39S) which comprises a 16S rRNA and about 50 distinct proteins.

The protein localises to the mitochondrion. This is Large ribosomal subunit protein bL36m (Mrpl36) from Mus musculus (Mouse).